The primary structure comprises 488 residues: 3-octaprenyl-4-hydroxybenzoate carboxy-lyase (488 aa).

Asn-172 is a binding site for Mn(2+). Residues 175 to 177 (IYR), 189 to 191 (RWL), and 194 to 195 (RG) contribute to the prenylated FMN site. Glu-238 is a binding site for Mn(2+). The active-site Proton donor is the Asp-287.

The protein belongs to the UbiD family. Homohexamer. Prenylated FMN serves as cofactor. The cofactor is Mn(2+).

The protein localises to the cell membrane. The catalysed reaction is a 4-hydroxy-3-(all-trans-polyprenyl)benzoate + H(+) = a 2-(all-trans-polyprenyl)phenol + CO2. Its pathway is cofactor biosynthesis; ubiquinone biosynthesis. In terms of biological role, catalyzes the decarboxylation of 3-octaprenyl-4-hydroxy benzoate to 2-octaprenylphenol, an intermediate step in ubiquinone biosynthesis. The chain is 3-octaprenyl-4-hydroxybenzoate carboxy-lyase from Pseudomonas putida (strain ATCC 47054 / DSM 6125 / CFBP 8728 / NCIMB 11950 / KT2440).